The primary structure comprises 138 residues: Small ribosomal subunit protein uS8 (138 aa).

The protein belongs to the universal ribosomal protein uS8 family. In terms of assembly, part of the 30S ribosomal subunit. Contacts proteins S5 and S12.

Its function is as follows. One of the primary rRNA binding proteins, it binds directly to 16S rRNA central domain where it helps coordinate assembly of the platform of the 30S subunit. This chain is Small ribosomal subunit protein uS8, found in Thermus aquaticus.